A 107-amino-acid chain; its full sequence is Pathogenesis-related protein PR-4 (107 aa).

Positions 1 to 107 (QNINWDLRTA…VNYDFVDCGD (107 aa)) constitute a Barwin domain. 3 disulfides stabilise this stretch: C14–C46, C35–C69, and C49–C105.

Preferentially expressed in the tissue surrounding the abscission zone of fruitlets.

It is found in the secreted. The protein localises to the cell wall. May be involved in protecting plant tissues from pathogen infection. This chain is Pathogenesis-related protein PR-4, found in Prunus persica (Peach).